A 196-amino-acid polypeptide reads, in one-letter code: Protein LURP-one-related 8 (196 aa).

Belongs to the LOR family.

Its function is as follows. Might be related to the phospholipid scramblase and tubby-like superfamily of membrane tethered transcription factors. This is Protein LURP-one-related 8 from Arabidopsis thaliana (Mouse-ear cress).